We begin with the raw amino-acid sequence, 232 residues long: Large ribosomal subunit protein uL1 (232 aa).

Belongs to the universal ribosomal protein uL1 family. As to quaternary structure, part of the 50S ribosomal subunit.

Its function is as follows. Binds directly to 23S rRNA. The L1 stalk is quite mobile in the ribosome, and is involved in E site tRNA release. In terms of biological role, protein L1 is also a translational repressor protein, it controls the translation of the L11 operon by binding to its mRNA. This chain is Large ribosomal subunit protein uL1, found in Chlamydia trachomatis serovar D (strain ATCC VR-885 / DSM 19411 / UW-3/Cx).